Here is a 436-residue protein sequence, read N- to C-terminus: Na(+)/H(+) antiporter NhaA (436 aa).

A run of 11 helical transmembrane segments spans residues 14–34, 59–79, 95–115, 125–145, 152–172, 176–196, 214–234, 300–320, 336–356, 374–394, and 407–427; these read AGGI…NSTW, LHHW…GLEL, ALPV…YHQF, WGIP…LLAW, IIFL…VIAI, PALH…LLLF, FWYF…FLAF, AIQP…NAGI, IGTC…SSWL, LLGA…IGQL, and LGIL…LFQV.

The protein belongs to the NhaA Na(+)/H(+) (TC 2.A.33) antiporter family.

It is found in the cell inner membrane. It catalyses the reaction Na(+)(in) + 2 H(+)(out) = Na(+)(out) + 2 H(+)(in). Na(+)/H(+) antiporter that extrudes sodium in exchange for external protons. The sequence is that of Na(+)/H(+) antiporter NhaA from Acidithiobacillus ferrooxidans (strain ATCC 23270 / DSM 14882 / CIP 104768 / NCIMB 8455) (Ferrobacillus ferrooxidans (strain ATCC 23270)).